Here is a 95-residue protein sequence, read N- to C-terminus: UPF0235 protein Pcar_0617 (95 aa).

This sequence belongs to the UPF0235 family.

This is UPF0235 protein Pcar_0617 from Syntrophotalea carbinolica (strain DSM 2380 / NBRC 103641 / GraBd1) (Pelobacter carbinolicus).